A 502-amino-acid polypeptide reads, in one-letter code: Glycerol kinase (502 aa).

Thr-14 serves as a coordination point for ADP. The ATP site is built by Thr-14, Thr-15, and Ser-16. Residue Thr-14 participates in sn-glycerol 3-phosphate binding. Arg-18 lines the ADP pocket. 3 residues coordinate sn-glycerol 3-phosphate: Arg-84, Glu-85, and Tyr-136. Residues Arg-84, Glu-85, and Tyr-136 each coordinate glycerol. The residue at position 232 (His-232) is a Phosphohistidine; by HPr. Residue Asp-246 participates in sn-glycerol 3-phosphate binding. Asp-246 and Gln-247 together coordinate glycerol. Residues Thr-268 and Gly-311 each contribute to the ADP site. ATP contacts are provided by Thr-268, Gly-311, Gln-315, and Gly-412. 2 residues coordinate ADP: Gly-412 and Asn-416.

Belongs to the FGGY kinase family. Homotetramer and homodimer (in equilibrium). The phosphoenolpyruvate-dependent sugar phosphotransferase system (PTS), including enzyme I, and histidine-containing protein (HPr) are required for the phosphorylation, which leads to the activation of the enzyme.

The enzyme catalyses glycerol + ATP = sn-glycerol 3-phosphate + ADP + H(+). Its pathway is polyol metabolism; glycerol degradation via glycerol kinase pathway; sn-glycerol 3-phosphate from glycerol: step 1/1. With respect to regulation, activated by phosphorylation and inhibited by fructose 1,6-bisphosphate (FBP). Functionally, key enzyme in the regulation of glycerol uptake and metabolism. Catalyzes the phosphorylation of glycerol to yield sn-glycerol 3-phosphate. The polypeptide is Glycerol kinase (Streptococcus gordonii (strain Challis / ATCC 35105 / BCRC 15272 / CH1 / DL1 / V288)).